The sequence spans 268 residues: Tryptophan synthase alpha chain (268 aa).

Catalysis depends on proton acceptor residues glutamate 49 and aspartate 60.

Belongs to the TrpA family. As to quaternary structure, tetramer of two alpha and two beta chains.

It carries out the reaction (1S,2R)-1-C-(indol-3-yl)glycerol 3-phosphate + L-serine = D-glyceraldehyde 3-phosphate + L-tryptophan + H2O. It functions in the pathway amino-acid biosynthesis; L-tryptophan biosynthesis; L-tryptophan from chorismate: step 5/5. Functionally, the alpha subunit is responsible for the aldol cleavage of indoleglycerol phosphate to indole and glyceraldehyde 3-phosphate. The sequence is that of Tryptophan synthase alpha chain from Escherichia coli (strain ATCC 8739 / DSM 1576 / NBRC 3972 / NCIMB 8545 / WDCM 00012 / Crooks).